The primary structure comprises 791 residues: Primase D5 (791 aa).

D174 is an active-site residue. The segment at 346-471 (SDRGEYLVWL…ELMSILDDIQ (126 aa)) is primase. In terms of domain architecture, SF3 helicase spans 479–641 (ENRELYEQIL…FTNTKKKVHN (163 aa)). 505 to 512 (GETATGKS) contributes to the ATP binding site.

This sequence belongs to the poxviridae D5 family. As to quaternary structure, interacts with A20.

Functionally, primase which may have roles in initiation of DNA replication or lagging-strand synthesis. This Fowlpox virus (strain NVSL) (FPV) protein is Primase D5.